We begin with the raw amino-acid sequence, 151 residues long: uncharacterized protein (151 aa).

The segment at 122 to 151 (GVAQRQVPTTGTHSFFHCTSEGNKEKPHHF) is disordered.

This is an uncharacterized protein from Homo sapiens (Human).